The following is a 130-amino-acid chain: Large ribosomal subunit protein bL31c (130 aa).

The N-terminal 36 residues, 1–36 (MVLTLSNQFLAKIPATPKTLTLPKTSSSTLRPQWSC), are a transit peptide targeting the chloroplast.

It belongs to the bacterial ribosomal protein bL31 family. Type A subfamily. In terms of assembly, component of the chloroplast large ribosomal subunit (LSU). Mature 70S chloroplast ribosomes of higher plants consist of a small (30S) and a large (50S) subunit. The 30S small subunit contains 1 molecule of ribosomal RNA (16S rRNA) and 24 different proteins. The 50S large subunit contains 3 rRNA molecules (23S, 5S and 4.5S rRNA) and 33 different proteins.

The protein localises to the plastid. It localises to the chloroplast. Its function is as follows. Component of the chloroplast ribosome (chloro-ribosome), a dedicated translation machinery responsible for the synthesis of chloroplast genome-encoded proteins, including proteins of the transcription and translation machinery and components of the photosynthetic apparatus. In Spinacia oleracea (Spinach), this protein is Large ribosomal subunit protein bL31c (RPL31).